The following is a 190-amino-acid chain: HTH-type transcriptional repressor AcnR (190 aa).

Residues 10–70 (SMRRQEILEG…ALAREDAARM (61 aa)) form the HTH tetR-type domain. Positions 33–52 (TVRRLEETVGKSRGAIFHHF) form a DNA-binding region, H-T-H motif. Residues 79–80 (LV), R130, and N134 each bind citrate. E181 serves as a coordination point for Mg(2+). Position 185 (R185) interacts with citrate.

In terms of assembly, homodimer.

Its function is as follows. AcnR negatively controls the expression of the aconitase gene acn. In Corynebacterium diphtheriae (strain ATCC 700971 / NCTC 13129 / Biotype gravis), this protein is HTH-type transcriptional repressor AcnR.